The following is a 216-amino-acid chain: GTP cyclohydrolase-2 (216 aa).

50–54 (RIHSE) contacts GTP. Positions 55, 66, and 68 each coordinate Zn(2+). Residues glutamine 71, 93–95 (EGR), and threonine 115 each bind GTP. Aspartate 127 acts as the Proton acceptor in catalysis. Catalysis depends on arginine 129, which acts as the Nucleophile. GTP is bound by residues threonine 150 and lysine 155.

The protein belongs to the GTP cyclohydrolase II family. The cofactor is Zn(2+).

It carries out the reaction GTP + 4 H2O = 2,5-diamino-6-hydroxy-4-(5-phosphoribosylamino)-pyrimidine + formate + 2 phosphate + 3 H(+). The protein operates within cofactor biosynthesis; riboflavin biosynthesis; 5-amino-6-(D-ribitylamino)uracil from GTP: step 1/4. Functionally, catalyzes the conversion of GTP to 2,5-diamino-6-ribosylamino-4(3H)-pyrimidinone 5'-phosphate (DARP), formate and pyrophosphate. The polypeptide is GTP cyclohydrolase-2 (Histophilus somni (strain 129Pt) (Haemophilus somnus)).